Here is a 482-residue protein sequence, read N- to C-terminus: Aspartyl/glutamyl-tRNA(Asn/Gln) amidotransferase subunit B (482 aa).

Belongs to the GatB/GatE family. GatB subfamily. As to quaternary structure, heterotrimer of A, B and C subunits.

It catalyses the reaction L-glutamyl-tRNA(Gln) + L-glutamine + ATP + H2O = L-glutaminyl-tRNA(Gln) + L-glutamate + ADP + phosphate + H(+). The enzyme catalyses L-aspartyl-tRNA(Asn) + L-glutamine + ATP + H2O = L-asparaginyl-tRNA(Asn) + L-glutamate + ADP + phosphate + 2 H(+). Functionally, allows the formation of correctly charged Asn-tRNA(Asn) or Gln-tRNA(Gln) through the transamidation of misacylated Asp-tRNA(Asn) or Glu-tRNA(Gln) in organisms which lack either or both of asparaginyl-tRNA or glutaminyl-tRNA synthetases. The reaction takes place in the presence of glutamine and ATP through an activated phospho-Asp-tRNA(Asn) or phospho-Glu-tRNA(Gln). This Ehrlichia canis (strain Jake) protein is Aspartyl/glutamyl-tRNA(Asn/Gln) amidotransferase subunit B.